Reading from the N-terminus, the 396-residue chain is Unsaturated chondroitin disaccharide hydrolase (396 aa).

Asp113 serves as the catalytic Nucleophile. Substrate-binding residues include Asp113, Asp173, Gly231, Thr233, Arg245, Trp249, Ser363, and Ser366. Asp173 (proton donor) is an active-site residue.

It belongs to the glycosyl hydrolase 88 family. Monomer.

It carries out the reaction beta-D-4-deoxy-Delta(4)-GlcpA-(1-&gt;3)-beta-D-GalpNAc6S + H2O = N-acetyl-beta-D-galactosamine 6-sulfate + 5-dehydro-4-deoxy-D-glucuronate. Catalyzes the hydrolysis of unsaturated hyaluronate and chondroitin disaccharides. Also degrades unsaturated heparin disaccharides. Releases 4-deoxy-4,5-didehydro D-glucuronic acid or 4-deoxy-4,5-didehydro L-iduronic acid from chondroitin disaccharides, hyaluronan disaccharides and heparin disaccharides and cleaves both glycosidic (1-&gt;3) and (1-&gt;4) bonds. Prefers sulfated glycosaminoglycans compared to unsulfated glycosaminoglycans. Probably required for mammalian cells invasion through the degradation of extracellular sulfated glycosaminoglycans such as chondroitin and hyaluronan. The polypeptide is Unsaturated chondroitin disaccharide hydrolase (ugl) (Streptococcus pneumoniae (strain ATCC BAA-255 / R6)).